Reading from the N-terminus, the 334-residue chain is Ornithine carbamoyltransferase (334 aa).

Residues 57-60 (STRT), Q84, R108, and 135-138 (HPTQ) contribute to the carbamoyl phosphate site. Residues N169, D233, and 237-238 (SM) each bind L-ornithine. Carbamoyl phosphate-binding positions include 275–276 (CL) and R320.

This sequence belongs to the aspartate/ornithine carbamoyltransferase superfamily. OTCase family.

It is found in the cytoplasm. It carries out the reaction carbamoyl phosphate + L-ornithine = L-citrulline + phosphate + H(+). The protein operates within amino-acid biosynthesis; L-arginine biosynthesis; L-arginine from L-ornithine and carbamoyl phosphate: step 1/3. Reversibly catalyzes the transfer of the carbamoyl group from carbamoyl phosphate (CP) to the N(epsilon) atom of ornithine (ORN) to produce L-citrulline. This Aliivibrio fischeri (strain ATCC 700601 / ES114) (Vibrio fischeri) protein is Ornithine carbamoyltransferase.